A 437-amino-acid chain; its full sequence is GTPase Obg (437 aa).

The Obg domain occupies 2-160 (SMFLDTAKIS…RQLELELKIL (159 aa)). The OBG-type G domain occupies 161 to 338 (ADVGLVGFPS…LLEATAELLA (178 aa)). Residues 167–174 (GFPSVGKS), 192–196 (FTTIV), 214–217 (DLPG), 284–287 (NKMD), and 319–321 (SSL) contribute to the GTP site. Residues Ser-174 and Thr-194 each coordinate Mg(2+). Residues 359-437 (GFAKTEKDFE…IGKFEFEFVD (79 aa)) form the OCT domain.

This sequence belongs to the TRAFAC class OBG-HflX-like GTPase superfamily. OBG GTPase family. Monomer. Requires Mg(2+) as cofactor.

It is found in the cytoplasm. In terms of biological role, an essential GTPase which binds GTP, GDP and possibly (p)ppGpp with moderate affinity, with high nucleotide exchange rates and a fairly low GTP hydrolysis rate. Plays a role in control of the cell cycle, stress response, ribosome biogenesis and in those bacteria that undergo differentiation, in morphogenesis control. The polypeptide is GTPase Obg (Streptococcus pyogenes serotype M2 (strain MGAS10270)).